We begin with the raw amino-acid sequence, 453 residues long: Ribosomal protein uS12 methylthiotransferase RimO (453 aa).

One can recognise an MTTase N-terminal domain in the interval 6-116; the sequence is PKVGFVSLGC…VMEAVHEALP (111 aa). Residues cysteine 15, cysteine 51, cysteine 80, cysteine 147, cysteine 151, and cysteine 154 each contribute to the [4Fe-4S] cluster site. In terms of domain architecture, Radical SAM core spans 133 to 370; it reads LTPRHYAYLK…MEKQAQISAA (238 aa). Residues 373-441 enclose the TRAM domain; sequence EAKIGTVQQC…EHDLYGDALP (69 aa).

Belongs to the methylthiotransferase family. RimO subfamily. The cofactor is [4Fe-4S] cluster.

It is found in the cytoplasm. The enzyme catalyses L-aspartate(89)-[ribosomal protein uS12]-hydrogen + (sulfur carrier)-SH + AH2 + 2 S-adenosyl-L-methionine = 3-methylsulfanyl-L-aspartate(89)-[ribosomal protein uS12]-hydrogen + (sulfur carrier)-H + 5'-deoxyadenosine + L-methionine + A + S-adenosyl-L-homocysteine + 2 H(+). Functionally, catalyzes the methylthiolation of an aspartic acid residue of ribosomal protein uS12. This is Ribosomal protein uS12 methylthiotransferase RimO from Stenotrophomonas maltophilia (strain K279a).